The chain runs to 63 residues: Large ribosomal subunit protein uL29 (63 aa).

The protein belongs to the universal ribosomal protein uL29 family.

In Shigella flexneri, this protein is Large ribosomal subunit protein uL29.